The sequence spans 309 residues: Homoserine kinase (309 aa).

91-101 serves as a coordination point for ATP; sequence PIGSGLGSSAC.

This sequence belongs to the GHMP kinase family. Homoserine kinase subfamily.

Its subcellular location is the cytoplasm. The catalysed reaction is L-homoserine + ATP = O-phospho-L-homoserine + ADP + H(+). The protein operates within amino-acid biosynthesis; L-threonine biosynthesis; L-threonine from L-aspartate: step 4/5. Catalyzes the ATP-dependent phosphorylation of L-homoserine to L-homoserine phosphate. The polypeptide is Homoserine kinase (Yersinia pseudotuberculosis serotype O:1b (strain IP 31758)).